A 36-amino-acid polypeptide reads, in one-letter code: Dermonecrotic toxin LgSicTox-beta-LOXN1/LOXN7 (36 aa).

Belongs to the arthropod phospholipase D family. Class II subfamily. The cofactor is Mg(2+). Contains 2 disulfide bonds. In terms of tissue distribution, expressed by the venom gland.

The protein localises to the secreted. The enzyme catalyses an N-(acyl)-sphingosylphosphocholine = an N-(acyl)-sphingosyl-1,3-cyclic phosphate + choline. The catalysed reaction is an N-(acyl)-sphingosylphosphoethanolamine = an N-(acyl)-sphingosyl-1,3-cyclic phosphate + ethanolamine. It carries out the reaction a 1-acyl-sn-glycero-3-phosphocholine = a 1-acyl-sn-glycero-2,3-cyclic phosphate + choline. It catalyses the reaction a 1-acyl-sn-glycero-3-phosphoethanolamine = a 1-acyl-sn-glycero-2,3-cyclic phosphate + ethanolamine. Functionally, dermonecrotic toxins cleave the phosphodiester linkage between the phosphate and headgroup of certain phospholipids (sphingolipid and lysolipid substrates), forming an alcohol (often choline) and a cyclic phosphate. This toxin acts on sphingomyelin (SM). It may also act on ceramide phosphoethanolamine (CPE), lysophosphatidylcholine (LPC) and lysophosphatidylethanolamine (LPE), but not on lysophosphatidylserine (LPS), and lysophosphatidylglycerol (LPG). It acts by transphosphatidylation, releasing exclusively cyclic phosphate products as second products. Induces dermonecrosis, hemolysis, increased vascular permeability, edema, inflammatory response, and platelet aggregation. The polypeptide is Dermonecrotic toxin LgSicTox-beta-LOXN1/LOXN7 (Loxosceles gaucho (Spider)).